Here is a 393-residue protein sequence, read N- to C-terminus: Lipid-A-disaccharide synthase (393 aa).

The protein belongs to the LpxB family.

The enzyme catalyses a lipid X + a UDP-2-N,3-O-bis[(3R)-3-hydroxyacyl]-alpha-D-glucosamine = a lipid A disaccharide + UDP + H(+). The protein operates within bacterial outer membrane biogenesis; LPS lipid A biosynthesis. In terms of biological role, condensation of UDP-2,3-diacylglucosamine and 2,3-diacylglucosamine-1-phosphate to form lipid A disaccharide, a precursor of lipid A, a phosphorylated glycolipid that anchors the lipopolysaccharide to the outer membrane of the cell. The chain is Lipid-A-disaccharide synthase from Bordetella bronchiseptica (strain ATCC BAA-588 / NCTC 13252 / RB50) (Alcaligenes bronchisepticus).